Consider the following 304-residue polypeptide: Cytochrome c biogenesis protein CcsA (304 aa).

A run of 8 helical transmembrane segments spans residues 8 to 28, 37 to 57, 63 to 83, 96 to 116, 141 to 161, 212 to 232, 246 to 263, and 275 to 295; these read LVTSLGFAAFVLLLIALPIAF, PGVVRLLVAVANLLLTAQLVL, GHFPISNLYESLCFLAWACTL, IVAAAATPMGLGCIAFASFAL, VIMVSYAALLVGSLLSLAVLV, TITVGFLMLTVGIISGAVWAN, TWALICWLVYAAYLHTRL, and VAVVGLIVIAVCYIGVNLLGI.

Belongs to the CcmF/CycK/Ccl1/NrfE/CcsA family. In terms of assembly, may interact with ccs1.

The protein resides in the cellular thylakoid membrane. Its function is as follows. Required during biogenesis of c-type cytochromes (cytochrome c6 and cytochrome f) at the step of heme attachment. The chain is Cytochrome c biogenesis protein CcsA from Synechococcus sp. (strain CC9902).